The chain runs to 191 residues: Phosphoheptose isomerase (191 aa).

One can recognise an SIS domain in the interval 34–191 (IATALKDGNK…LVEEMVCERS (158 aa)). 49–51 (NGG) is a binding site for substrate. Residues His58 and Glu62 each contribute to the Zn(2+) site. Substrate contacts are provided by residues Glu62, 91–92 (ND), 117–119 (TTS), Ser122, and Gln169. Zn(2+) contacts are provided by Gln169 and His177.

This sequence belongs to the SIS family. GmhA subfamily. Zn(2+) serves as cofactor.

It localises to the cytoplasm. It catalyses the reaction 2 D-sedoheptulose 7-phosphate = D-glycero-alpha-D-manno-heptose 7-phosphate + D-glycero-beta-D-manno-heptose 7-phosphate. Its pathway is carbohydrate biosynthesis; D-glycero-D-manno-heptose 7-phosphate biosynthesis; D-glycero-alpha-D-manno-heptose 7-phosphate and D-glycero-beta-D-manno-heptose 7-phosphate from sedoheptulose 7-phosphate: step 1/1. Functionally, catalyzes the isomerization of sedoheptulose 7-phosphate in D-glycero-D-manno-heptose 7-phosphate. The protein is Phosphoheptose isomerase of Aquifex aeolicus (strain VF5).